A 352-amino-acid polypeptide reads, in one-letter code: Cuticle collagen dpy-17 (352 aa).

An N-terminal signal peptide occupies residues 1–29 (MSVFAGYAACTLGAVSMLLCVSLVPQVYQ). The segment at 61 to 64 (RVRR) is furin-like endopeptidase recognition region. 2 disordered regions span residues 73–143 (GGYG…GPGD) and 156–352 (GPAG…GYRN). Residues 87 to 97 (GPHGGFPGGPQ) show a composition bias toward gly residues. 4 triple-helical region regions span residues 156-182 (GPAG…DGED), 202-264 (GPQG…DVEH), 267-290 (GLPG…QGDR), and 294-329 (GIAG…PGQD). Residues 202–259 (GPQGPPGSQGKPGARGMRGARGQAAMPGRDGSPGMPGSLGPIGPPGAAGEEGPTGEPG) form the Collagen-like domain. Over residues 207-259 (PGSQGKPGARGMRGARGQAAMPGRDGSPGMPGSLGPIGPPGAAGEEGPTGEPG) the composition is skewed to low complexity. Polar residues predominate over residues 337–352 (QRNTNAAVSGNQGYRN).

Belongs to the cuticular collagen family. In terms of assembly, collagen polypeptide chains are complexed within the cuticle by disulfide bonds and other types of covalent cross-links.

It localises to the secreted. The protein resides in the extracellular space. Secreted collagen that forms part of the nematode cuticle, which functions as an exoskeleton and a barrier to protect the worm from its environment. Secretion and subsequent incorporation into the cuticle is likely mediated by bli-4, which probably cleaves at the N-terminal consensus furin cleavage site. The chain is Cuticle collagen dpy-17 from Caenorhabditis elegans.